The primary structure comprises 344 residues: Galactinol synthase 1 (344 aa).

The active site involves K111. D127, D129, and H265 together coordinate Mn(2+).

Belongs to the glycosyltransferase 8 family. Galactosyltransferase subfamily. Requires a divalent metal cation as cofactor. Accumulates in mature seeds. Expressed in seedlings (axes and cotyledons), meristems, vascular tissues and emerging lateral roots. Present in abscission zones.

It is found in the cytoplasm. It carries out the reaction myo-inositol + UDP-alpha-D-galactose = alpha-D-galactosyl-(1-&gt;3)-1D-myo-inositol + UDP + H(+). Its function is as follows. Galactinol synthase involved in the biosynthesis of raffinose family oligosaccharides (RFOs) that function as osmoprotectants. Promotes plant stress tolerance such as heat, chilling, salinity and methylviologen (MV), a superoxide radical generating drug, by mediating raffinose accumulation, an osmoprotective substance. The protein is Galactinol synthase 1 (GOLS1) of Arabidopsis thaliana (Mouse-ear cress).